Consider the following 370-residue polypeptide: Histidinol-phosphate aminotransferase 3 (370 aa).

At Lys-229 the chain carries N6-(pyridoxal phosphate)lysine.

The protein belongs to the class-II pyridoxal-phosphate-dependent aminotransferase family. Histidinol-phosphate aminotransferase subfamily. As to quaternary structure, homodimer. It depends on pyridoxal 5'-phosphate as a cofactor.

It carries out the reaction L-histidinol phosphate + 2-oxoglutarate = 3-(imidazol-4-yl)-2-oxopropyl phosphate + L-glutamate. The protein operates within amino-acid biosynthesis; L-histidine biosynthesis; L-histidine from 5-phospho-alpha-D-ribose 1-diphosphate: step 7/9. The polypeptide is Histidinol-phosphate aminotransferase 3 (hisC3) (Rhizobium meliloti (strain 1021) (Ensifer meliloti)).